Here is a 308-residue protein sequence, read N- to C-terminus: Zinc finger CCCH domain-containing protein 15 (308 aa).

Positions 1 to 21 (MENKIAPFSYSGSSAGNSSSG) are disordered. Over residues 9–21 (SYSGSSAGNSSSG) the composition is skewed to low complexity. Positions 56–91 (TRLHEASLEAEALRLENTELRSMNLRLKNELNSLIR) form a coiled coil. The tract at residues 110-190 (LSIGGNDADE…GTVTKPGTCG (81 aa)) is disordered. Position 111 is a phosphoserine (Ser111). Residues 148 to 164 (RSSLPKSISVRSNGYSK) show a composition bias toward polar residues. 2 C3H1-type zinc fingers span residues 222–250 (MTKT…HGIK) and 260–288 (RYKT…HSLS).

In terms of processing, phosphorylated at Ser-111 by ASK7/BIN2 in the cytoplasm in the absence of brassinosteroids (BRs). Highly expressed in secondary cell wall-forming tissues and the xylem cells of roots. Expressed predominantly in inflorescence stems, flowers and siliques. Highly expressed in the basal portion of stems, where cells are undergoing secondary cell wall thickening. Highly expressed in meiocytes and tapetum from anthers.

The protein localises to the cytoplasm. It localises to the nucleus. Its function is as follows. Functions probably as a transcriptional factor that activates genes involved in secondary cell wall biosynthesis. Functions redudantly with C3H14 to regulate secondary cell wall formation. C3H14 and C3H15 have overlapping roles in the regulation of secondary cell wall formation and anther development. C3H14 may contribute more to secondary cell wall thickening while C3H15 could be more important in anther development. May regulate at both the transcriptional and post-transcriptional levels the expression of many genes involved in various biological processes, particularly those associated with cell wall metabolism and pollen development. Involved in the regulation of callose metabolism in male meiocytes, in integrity of newly formed microspores, and promotes male fertility. May be involved in the regulation of the callose synthesis genes CALS5 and CALS12, the potential degradation of callose walls-related genes A6 and MYB80, as well as other putative beta-1,3-glucanase genes. Negatively regulates cell elongation by inhibiting brassinosteroid (BR) signaling. Functions downstream of the BRI1 receptor as a negative regulator in the BR pathway. The chain is Zinc finger CCCH domain-containing protein 15 from Arabidopsis thaliana (Mouse-ear cress).